The chain runs to 101 residues: Small ribosomal subunit protein uS14 (101 aa).

The protein belongs to the universal ribosomal protein uS14 family. In terms of assembly, part of the 30S ribosomal subunit. Contacts proteins S3 and S10.

Binds 16S rRNA, required for the assembly of 30S particles and may also be responsible for determining the conformation of the 16S rRNA at the A site. The protein is Small ribosomal subunit protein uS14 of Chlamydia caviae (strain ATCC VR-813 / DSM 19441 / 03DC25 / GPIC) (Chlamydophila caviae).